Reading from the N-terminus, the 100-residue chain is Integration host factor subunit alpha (100 aa).

The interval 53-73 (FDLRDKRQRPGRNPKTGEEIP) is disordered.

It belongs to the bacterial histone-like protein family. In terms of assembly, heterodimer of an alpha and a beta chain.

Its function is as follows. This protein is one of the two subunits of integration host factor, a specific DNA-binding protein that functions in genetic recombination as well as in transcriptional and translational control. The protein is Integration host factor subunit alpha of Pseudomonas aeruginosa (strain LESB58).